Reading from the N-terminus, the 139-residue chain is Nucleoside diphosphate kinase (139 aa).

Positions 10, 58, 86, 92, 104, and 114 each coordinate ATP. Residue His-117 is the Pros-phosphohistidine intermediate of the active site.

Belongs to the NDK family. As to quaternary structure, homotetramer. It depends on Mg(2+) as a cofactor.

It is found in the cytoplasm. The catalysed reaction is a 2'-deoxyribonucleoside 5'-diphosphate + ATP = a 2'-deoxyribonucleoside 5'-triphosphate + ADP. The enzyme catalyses a ribonucleoside 5'-diphosphate + ATP = a ribonucleoside 5'-triphosphate + ADP. Its function is as follows. Major role in the synthesis of nucleoside triphosphates other than ATP. The ATP gamma phosphate is transferred to the NDP beta phosphate via a ping-pong mechanism, using a phosphorylated active-site intermediate. The polypeptide is Nucleoside diphosphate kinase (Nocardia farcinica (strain IFM 10152)).